The sequence spans 785 residues: E3 UFM1-protein ligase 1 homolog (785 aa).

Basic and acidic residues predominate over residues 396 to 416; it reads MKHQDVIPDKESAENKADKRD. The tract at residues 396 to 473 is disordered; it reads MKHQDVIPDK…KSAGGKKGAK (78 aa). Residues 439-449 show a composition bias toward basic residues; the sequence is KSTKKHARGHR.

Belongs to the UFL1 family.

Functionally, E3 UFM1-protein ligase that mediates ufmylation of target proteins. The sequence is that of E3 UFM1-protein ligase 1 homolog from Culex quinquefasciatus (Southern house mosquito).